A 170-amino-acid chain; its full sequence is Urease accessory protein UreE (170 aa).

The protein belongs to the UreE family.

The protein localises to the cytoplasm. Involved in urease metallocenter assembly. Binds nickel. Probably functions as a nickel donor during metallocenter assembly. The polypeptide is Urease accessory protein UreE (Helicobacter pylori (strain HPAG1)).